Consider the following 216-residue polypeptide: Ribosomal RNA small subunit methyltransferase G (216 aa).

S-adenosyl-L-methionine is bound by residues glycine 73, leucine 78, alanine 124–glutamate 125, and arginine 139.

This sequence belongs to the methyltransferase superfamily. RNA methyltransferase RsmG family.

Its subcellular location is the cytoplasm. Its function is as follows. Specifically methylates the N7 position of guanine in position 518 of 16S rRNA. The sequence is that of Ribosomal RNA small subunit methyltransferase G from Arthrobacter sp. (strain FB24).